Reading from the N-terminus, the 308-residue chain is Ribonuclease HIII (308 aa).

Residues 91–308 (KNVIGSDEVG…TEKALKMVKK (218 aa)) form the RNase H type-2 domain. 3 residues coordinate a divalent metal cation: D97, E98, and D202.

This sequence belongs to the RNase HII family. RnhC subfamily. Requires Mn(2+) as cofactor. The cofactor is Mg(2+).

It is found in the cytoplasm. The enzyme catalyses Endonucleolytic cleavage to 5'-phosphomonoester.. Its function is as follows. Endonuclease that specifically degrades the RNA of RNA-DNA hybrids. This Listeria monocytogenes serotype 4b (strain F2365) protein is Ribonuclease HIII.